The primary structure comprises 365 residues: Large ribosomal subunit protein uL3 (365 aa).

The tract at residues 343-365 (RPPKKKPPVQRPQITYVSVESKQ) is disordered. Over residues 354 to 365 (PQITYVSVESKQ) the composition is skewed to polar residues.

The protein belongs to the universal ribosomal protein uL3 family. Part of the 50S ribosomal subunit. Forms a cluster with proteins L14 and L24e.

One of the primary rRNA binding proteins, it binds directly near the 3'-end of the 23S rRNA, where it nucleates assembly of the 50S subunit. The protein is Large ribosomal subunit protein uL3 of Pyrococcus furiosus (strain ATCC 43587 / DSM 3638 / JCM 8422 / Vc1).